The chain runs to 422 residues: Serine hydroxymethyltransferase (422 aa).

A (6S)-5,6,7,8-tetrahydrofolate-binding site is contributed by 120-122; it reads GHI. K226 carries the post-translational modification N6-(pyridoxal phosphate)lysine. Residue E241 coordinates (6S)-5,6,7,8-tetrahydrofolate.

The protein belongs to the SHMT family. In terms of assembly, homodimer. It depends on pyridoxal 5'-phosphate as a cofactor.

The protein localises to the cytoplasm. The enzyme catalyses 5,10-methylenetetrahydromethanopterin + glycine + H2O = 5,6,7,8-tetrahydromethanopterin + L-serine. It functions in the pathway amino-acid biosynthesis; glycine biosynthesis; glycine from L-serine: step 1/1. Its function is as follows. Catalyzes the reversible interconversion of serine and glycine with tetrahydromethanopterin (H4MPT) serving as the one-carbon carrier. Also exhibits a pteridine-independent aldolase activity toward beta-hydroxyamino acids, producing glycine and aldehydes, via a retro-aldol mechanism. The chain is Serine hydroxymethyltransferase from Methanosphaera stadtmanae (strain ATCC 43021 / DSM 3091 / JCM 11832 / MCB-3).